We begin with the raw amino-acid sequence, 249 residues long: 3-deoxy-D-manno-octulosonic acid kinase (249 aa).

D175 is a catalytic residue.

Belongs to the protein kinase superfamily. KdkA/RfaP family.

It is found in the cell inner membrane. It catalyses the reaction an alpha-Kdo-(2-&gt;6)-lipid IVA + ATP = a 4-O-phospho-alpha-Kdo-(2-&gt;6)-lipid IVA + ADP + H(+). It functions in the pathway bacterial outer membrane biogenesis; LPS core biosynthesis. Catalyzes the ATP-dependent phosphorylation of the 3-deoxy-D-manno-octulosonic acid (Kdo) residue in Kdo-lipid IV(A) at the 4-OH position. The protein is 3-deoxy-D-manno-octulosonic acid kinase of Xanthomonas campestris pv. campestris (strain 8004).